A 323-amino-acid polypeptide reads, in one-letter code: Aldo-keto reductase family 1 member C1 (323 aa).

Residues Gly-20–Tyr-24 and Asp-50 contribute to the NADP(+) site. Tyr-24 lines the substrate pocket. The active-site Proton donor is Tyr-55. His-117 provides a ligand contact to substrate. Residues Ser-166 to Asn-167, Gln-190, and Tyr-216 to His-222 each bind NADP(+). 2 residues coordinate substrate: His-222 and Trp-227. Residue Lys-270–Asn-280 participates in NADP(+) binding.

Belongs to the aldo/keto reductase family. In terms of assembly, monomer. Expressed in all tissues tested including liver, prostate, testis, adrenal gland, brain, uterus, mammary gland and keratinocytes. Highest levels found in liver, mammary gland and brain.

Its subcellular location is the cytoplasm. It localises to the cytosol. The catalysed reaction is a 3alpha-hydroxysteroid + NADP(+) = a 3-oxosteroid + NADPH + H(+). It catalyses the reaction a 3alpha-hydroxysteroid + NAD(+) = a 3-oxosteroid + NADH + H(+). It carries out the reaction (17R,20S)-17,20-dihydroxypregn-4-en-3-one + NADP(+) = 17alpha-hydroxyprogesterone + NADPH + H(+). The enzyme catalyses (17R,20S)-17,20-dihydroxypregn-4-en-3-one + NAD(+) = 17alpha-hydroxyprogesterone + NADH + H(+). The catalysed reaction is (20S)-hydroxypregn-4-en-3-one + NADP(+) = progesterone + NADPH + H(+). It catalyses the reaction (20S)-hydroxypregn-4-en-3-one + NAD(+) = progesterone + NADH + H(+). It carries out the reaction (1R,2R)-1,2-dihydrobenzene-1,2-diol + NADP(+) = catechol + NADPH + H(+). The enzyme catalyses (S)-indan-1-ol + NAD(+) = indan-1-one + NADH + H(+). The catalysed reaction is (S)-indan-1-ol + NADP(+) = indan-1-one + NADPH + H(+). It catalyses the reaction 5alpha-androstane-3alpha,17beta-diol + NADP(+) = 17beta-hydroxy-5alpha-androstan-3-one + NADPH + H(+). It carries out the reaction 5alpha-androstane-3beta,17beta-diol + NADP(+) = 17beta-hydroxy-5alpha-androstan-3-one + NADPH + H(+). The enzyme catalyses 5alpha-androstane-3alpha,17beta-diol + NAD(+) = 17beta-hydroxy-5alpha-androstan-3-one + NADH + H(+). The catalysed reaction is 17beta-hydroxy-5alpha-androstan-3-one + NADP(+) = 5alpha-androstan-3,17-dione + NADPH + H(+). It catalyses the reaction androsterone + NADP(+) = 5alpha-androstan-3,17-dione + NADPH + H(+). It carries out the reaction androsterone + NADPH + H(+) = 5alpha-androstane-3alpha,17beta-diol + NADP(+). The enzyme catalyses 5alpha-androstane-3alpha,17beta-diol + NAD(+) = androsterone + NADH + H(+). The catalysed reaction is 17beta-estradiol + NADP(+) = estrone + NADPH + H(+). It catalyses the reaction 17beta-estradiol + NAD(+) = estrone + NADH + H(+). It carries out the reaction testosterone + NADP(+) = androst-4-ene-3,17-dione + NADPH + H(+). The enzyme catalyses 20alpha-hydroxy-5beta-pregnan-3-one + NADP(+) = 5beta-pregnan-3,20-dione + NADPH + H(+). The catalysed reaction is 3beta-hydroxy-5beta-pregnane-20-one + NADP(+) = 5beta-pregnan-3,20-dione + NADPH + H(+). It catalyses the reaction 3beta-hydroxy-5beta-pregnane-20-one + NADPH + H(+) = 3beta,20alpha-dihydroxy-5beta-pregnane + NADP(+). It carries out the reaction (3beta,5alpha,17beta)-3-hydroxyandrostan-17-yl sulfate + NADP(+) = 5alpha-dihydrotestosterone sulfate + NADPH + H(+). The protein operates within steroid metabolism. Its activity is regulated as follows. Inhibited by hexestrol with an IC(50) of 9.5 uM, 1,10-phenanthroline with an IC(50) of 55 uM, 1,7-phenanthroline with an IC(50) of 72 uM, flufenamic acid with an IC(50) of 6.0 uM, indomethacin with an IC(50) of 140 uM, ibuprofen with an IC(50) of 950 uM, lithocholic acid with an IC(50) of 25 uM, ursodeoxycholic acid with an IC(50) of 340 uM and chenodeoxycholic acid with an IC(50) of 570 uM. The oxidation reaction is inhibited by low micromolar concentrations of NADPH. Functionally, cytosolic aldo-keto reductase that catalyzes the NADH and NADPH-dependent reduction of ketosteroids to hydroxysteroids. Most probably acts as a reductase in vivo since the oxidase activity measured in vitro is inhibited by physiological concentrations of NADPH. Displays a broad positional specificity acting on positions 3, 17 and 20 of steroids and regulates the metabolism of hormones like estrogens and androgens. May also reduce conjugated steroids such as 5alpha-dihydrotestosterone sulfate. Displays affinity for bile acids. The chain is Aldo-keto reductase family 1 member C1 (AKR1C1) from Homo sapiens (Human).